We begin with the raw amino-acid sequence, 224 residues long: 7-cyano-7-deazaguanine synthase (224 aa).

10–20 (LSGGLDSATVA) is a binding site for ATP. Zn(2+) contacts are provided by Cys189, Cys199, Cys202, and Cys205.

The protein belongs to the QueC family. Zn(2+) is required as a cofactor.

It catalyses the reaction 7-carboxy-7-deazaguanine + NH4(+) + ATP = 7-cyano-7-deazaguanine + ADP + phosphate + H2O + H(+). Its pathway is purine metabolism; 7-cyano-7-deazaguanine biosynthesis. Functionally, catalyzes the ATP-dependent conversion of 7-carboxy-7-deazaguanine (CDG) to 7-cyano-7-deazaguanine (preQ(0)). The protein is 7-cyano-7-deazaguanine synthase of Azotobacter vinelandii (strain DJ / ATCC BAA-1303).